A 178-amino-acid chain; its full sequence is Caveolin-1 (178 aa).

S2 bears the N-acetylserine mark. S2 is subject to Phosphoserine. Positions 2–94 are required for homooligomerization; it reads SGGKYVDSEG…WKASFTTFTV (93 aa). Residues 2-104 lie on the Cytoplasmic side of the membrane; that stretch reads SGGKYVDSEG…TKYWFYRLLS (103 aa). N6-acetyllysine; alternate is present on K5. K5 participates in a covalent cross-link: Glycyl lysine isopeptide (Lys-Gly) (interchain with G-Cter in ubiquitin); alternate. At Y6 the chain carries Phosphotyrosine. S9 is modified (phosphoserine). Position 14 is a phosphotyrosine; by ABL1 (Y14). Phosphotyrosine is present on Y25. Residues K26 and K30 each participate in a glycyl lysine isopeptide (Lys-Gly) (interchain with G-Cter in ubiquitin) cross-link. S37 carries the phosphoserine modification. Glycyl lysine isopeptide (Lys-Gly) (interchain with G-Cter in ubiquitin) cross-links involve residues K39, K47, and K57. Residues 82–94 are interaction with CAVIN3; that stretch reads DGIWKASFTTFTV. Positions 105–125 form an intramembrane region, helical; the sequence is ALFGIPMALVWGIYFAILSFL. Topologically, residues 126 to 178 are cytoplasmic; the sequence is HIWAVVPCIKSFLIEIQCISRVYSIYVHTVCDPLFEAVGKIFSNVRINLQKEI. An interacts with SPRY1, SPRY2, SPRY3 and SPRY4 region spans residues 131–142; that stretch reads VPCIKSFLIEIQ. S-palmitoyl cysteine attachment occurs at residues C133, C143, and C156. The interval 149–160 is interacts with SPRY1, SPRY2, and SPRY4; the sequence is SIYVHTVCDPLF. The tract at residues 167–178 is interacts with SPRY1, SPRY2, SPRY3 and SPRY4; sequence FSNVRINLQKEI.

Belongs to the caveolin family. Homooligomer. Interacts with GLIPR2. Interacts with NOSTRIN. Interacts with SNAP25 and STX1A. Interacts (via the N-terminus) with DPP4; the interaction is direct. Interacts with CTNNB1, CDH1 and JUP. Interacts with PACSIN2; this interaction induces membrane tubulation. Interacts with SLC7A9. Interacts with BMX and BTK. Interacts with TGFBR1. Interacts with CAVIN3 (via leucine-zipper domain) in a cholesterol-sensitive manner. Interacts with CAVIN1. Interacts with EHD2 in a cholesterol-dependent manner. Forms a ternary complex with UBXN6 and VCP; mediates CAV1 targeting to lysosomes for degradation. Interacts with ABCG1; this interaction regulates ABCG1-mediated cholesterol efflux. Interacts with NEU3; this interaction enhances NEU3 sialidase activity within caveola. Interacts (via C-terminus) with SPRY1, SPRY2 (via C-terminus), SPRY3, and SPRY4. Interacts with IGFBP5; this interaction allows trafficking of IGFBP5 from the plasma membrane to the nucleus. Phosphorylated at Tyr-14 by ABL1 in response to oxidative stress. In terms of processing, ubiquitinated. Undergo monoubiquitination and multi- and/or polyubiquitination. Monoubiquitination of N-terminal lysines promotes integration in a ternary complex with UBXN6 and VCP which promotes oligomeric CAV1 targeting to lysosomes for degradation. Ubiquitinated by ZNRF1; leading to degradation and modulation of the TLR4-mediated immune response.

The protein localises to the golgi apparatus membrane. It localises to the cell membrane. The protein resides in the membrane. Its subcellular location is the caveola. It is found in the membrane raft. Functionally, may act as a scaffolding protein within caveolar membranes. Forms a stable heterooligomeric complex with CAV2 that targets to lipid rafts and drives caveolae formation. Mediates the recruitment of CAVIN proteins (CAVIN1/2/3/4) to the caveolae. Interacts directly with G-protein alpha subunits and can functionally regulate their activity. Involved in the costimulatory signal essential for T-cell receptor (TCR)-mediated T-cell activation. Its binding to DPP4 induces T-cell proliferation and NF-kappa-B activation in a T-cell receptor/CD3-dependent manner. Recruits CTNNB1 to caveolar membranes and may regulate CTNNB1-mediated signaling through the Wnt pathway. Negatively regulates TGFB1-mediated activation of SMAD2/3 by mediating the internalization of TGFBR1 from membrane rafts leading to its subsequent degradation. Binds 20(S)-hydroxycholesterol (20(S)-OHC). The sequence is that of Caveolin-1 (CAV1) from Papio anubis (Olive baboon).